A 132-amino-acid polypeptide reads, in one-letter code: Small ribosomal subunit protein uS8 (132 aa).

The protein belongs to the universal ribosomal protein uS8 family. Part of the 30S ribosomal subunit. Contacts proteins S5 and S12.

Its function is as follows. One of the primary rRNA binding proteins, it binds directly to 16S rRNA central domain where it helps coordinate assembly of the platform of the 30S subunit. The chain is Small ribosomal subunit protein uS8 from Sinorhizobium fredii (strain NBRC 101917 / NGR234).